Consider the following 259-residue polypeptide: 5'-nucleotidase SurE (259 aa).

Aspartate 13, aspartate 14, serine 44, and asparagine 101 together coordinate a divalent metal cation.

It belongs to the SurE nucleotidase family. A divalent metal cation serves as cofactor.

Its subcellular location is the cytoplasm. The enzyme catalyses a ribonucleoside 5'-phosphate + H2O = a ribonucleoside + phosphate. Functionally, nucleotidase that shows phosphatase activity on nucleoside 5'-monophosphates. The protein is 5'-nucleotidase SurE of Flavobacterium johnsoniae (strain ATCC 17061 / DSM 2064 / JCM 8514 / BCRC 14874 / CCUG 350202 / NBRC 14942 / NCIMB 11054 / UW101) (Cytophaga johnsonae).